The primary structure comprises 229 residues: Somatolactin (229 aa).

Residues 1–24 (MHLVSVIQRGVWAVLLWPNLLASS) form the signal peptide. Disulfide bonds link C29–C39, C87–C203, and C220–C228. N143 and N175 each carry an N-linked (GlcNAc...) asparagine glycan.

This sequence belongs to the somatotropin/prolactin family.

Its subcellular location is the secreted. This is Somatolactin from Cyclopterus lumpus (Lumpsucker).